The sequence spans 452 residues: Probable ECA polymerase (452 aa).

Transmembrane regions (helical) follow at residues 6–26 (FSGLLVVWLLSTLFIATLTWF), 37–57 (VFFSLLFLLTFFFGFPLTSVL), 63–83 (VGVAPPEILLQALLSAACFYG), 118–138 (VILMGIALVSVAIFFMHNGFL), 155–175 (GVALKRFFYFFIPAMLVVYFL), 181–201 (AWLFFLVSTVAFGLLTYMIVG), 207–227 (IIIAFAIFLFIGIIRGWISLW), 228–248 (MLAAAGVLGIVGMFWLALKRY), 341–361 (LVVMGGALFIPLGAIVVGMII), 378–398 (YKAAILHSFCFGAIFNMIVLA), and 410–430 (VFFLVVFGASLLVAKLLFWLF).

It belongs to the WzyE family. In terms of assembly, probably part of a complex composed of WzxE, WzyE and WzzE.

Its subcellular location is the cell inner membrane. The protein operates within bacterial outer membrane biogenesis; enterobacterial common antigen biosynthesis. Probably involved in the polymerization of enterobacterial common antigen (ECA) trisaccharide repeat units. The sequence is that of Probable ECA polymerase from Salmonella newport (strain SL254).